Here is a 101-residue protein sequence, read N- to C-terminus: UPF0473 protein LAF_0524 (101 aa).

This sequence belongs to the UPF0473 family.

The protein is UPF0473 protein LAF_0524 of Limosilactobacillus fermentum (strain NBRC 3956 / LMG 18251) (Lactobacillus fermentum).